The sequence spans 72 residues: uncharacterized protein (72 aa).

This is an uncharacterized protein from Acidianus hospitalis (AFV-1).